A 431-amino-acid polypeptide reads, in one-letter code: Trigger factor (431 aa).

The region spanning 163-248 is the PPIase FKBP-type domain; the sequence is GHFAVIDFTG…LSEIKVKELP (86 aa).

It belongs to the FKBP-type PPIase family. Tig subfamily.

The protein localises to the cytoplasm. It catalyses the reaction [protein]-peptidylproline (omega=180) = [protein]-peptidylproline (omega=0). Its function is as follows. Involved in protein export. Acts as a chaperone by maintaining the newly synthesized protein in an open conformation. Functions as a peptidyl-prolyl cis-trans isomerase. This chain is Trigger factor, found in Geobacter sulfurreducens (strain ATCC 51573 / DSM 12127 / PCA).